The primary structure comprises 722 residues: DUF724 domain-containing protein 7 (722 aa).

Residues 424-449 form a disordered region; that stretch reads KTTPKKKLQAMKNQKSSTNDSVGEKV. A compositionally biased stretch (polar residues) spans 434–444; sequence MKNQKSSTNDS. Positions 540-720 constitute a DUF724 domain; that stretch reads VLPFVKKSQL…HEFQAILAAP (181 aa). Positions 645-712 form a coiled coil; sequence CALEELKAVE…DQEVQNVDHE (68 aa).

In terms of assembly, homodimer. Interacts wtih ABAP1, ARIA and LHP1. Interacts with the non-modified histones H1, H2B, H3 and H4. In terms of tissue distribution, expressed in roots, leaves, stems and flowers.

It localises to the nucleus. Functionally, may act as a link between DNA replication, transcription and chromatin remodeling during flower development. May participate in the repression of LHP1-targeted genes during flower development by direct interaction with LHP1. May be involved in the polar growth of plant cells via transportation of RNAs. The protein is DUF724 domain-containing protein 7 of Arabidopsis thaliana (Mouse-ear cress).